We begin with the raw amino-acid sequence, 59 residues long: Large ribosomal subunit protein bL32 (59 aa).

The protein belongs to the bacterial ribosomal protein bL32 family.

This chain is Large ribosomal subunit protein bL32, found in Thermodesulfovibrio yellowstonii (strain ATCC 51303 / DSM 11347 / YP87).